The chain runs to 419 residues: Alpha-galactosidase A (419 aa).

Positions 1–31 (MKLLSRDTRLVCELALCPLALVFWSILGVRA) are cleaved as a signal peptide. 2 disulfides stabilise this stretch: C52–C94 and C56–C63. N139 carries an N-linked (GlcNAc...) asparagine glycan. A disulfide bond links C142 and C172. D170 serves as the catalytic Nucleophile. Y186 is subject to Phosphotyrosine. N192 carries N-linked (GlcNAc...) asparagine glycosylation. C202 and C223 are disulfide-bonded. Residue 203-207 (EWPLY) coordinates substrate. N215 carries N-linked (GlcNAc...) asparagine glycosylation. D231 (proton donor) is an active-site residue. A disulfide bridge links C378 with C382.

This sequence belongs to the glycosyl hydrolase 27 family. As to quaternary structure, homodimer.

Its subcellular location is the lysosome. It catalyses the reaction Hydrolysis of terminal, non-reducing alpha-D-galactose residues in alpha-D-galactosides, including galactose oligosaccharides, galactomannans and galactolipids.. The enzyme catalyses a globoside Gb3Cer (d18:1(4E)) + H2O = a beta-D-Gal-(1-&gt;4)-beta-D-Glc-(1&lt;-&gt;1)-Cer(d18:1(4E)) + D-galactose. The catalysed reaction is a globoside Gb3Cer + H2O = a beta-D-galactosyl-(1-&gt;4)-beta-D-glucosyl-(1&lt;-&gt;1)-ceramide + D-galactose. Galactosylgalactosylglucosylceramidase activity is stimulated by saposin B and ammonium chloride. In terms of biological role, catalyzes the hydrolysis of glycosphingolipids and participates in their degradation in the lysosome. The chain is Alpha-galactosidase A from Mus musculus (Mouse).